The following is a 196-amino-acid chain: Thymidylate kinase (196 aa).

7–14 provides a ligand contact to ATP; that stretch reads GIDGSGKT.

Belongs to the thymidylate kinase family.

It catalyses the reaction dTMP + ATP = dTDP + ADP. Its function is as follows. Phosphorylation of dTMP to form dTDP in both de novo and salvage pathways of dTTP synthesis. The chain is Thymidylate kinase from Wolbachia pipientis wMel.